Reading from the N-terminus, the 690-residue chain is Highly divergent homeobox (690 aa).

The segment at residues 3–63 is a DNA-binding region (homeobox 1); that stretch reads LRSVFTVEQQ…NKRRKMSSKN (61 aa). 2 disordered regions span residues 55–76 and 112–132; these read KRRKMSSKNSESGTATTGTSLS and SPASSSSRQGTNKHTDTQITE. Residues 64-76 show a composition bias toward low complexity; that stretch reads SESGTATTGTSLS. Positions 113 to 123 are enriched in polar residues; it reads PASSSSRQGTN. Glycyl lysine isopeptide (Lys-Gly) (interchain with G-Cter in SUMO2) cross-links involve residues lysine 135, lysine 140, lysine 144, lysine 163, lysine 172, lysine 194, lysine 212, lysine 221, and lysine 232. Residues 435 to 498 constitute a DNA-binding region (homeobox 2); that stretch reads ALQDRTQFSD…NRRRKYRLMG (64 aa). Positions 501–539 are disordered; that stretch reads VPPPRGGPADFSEQPESGSLSALTPGEEAGPEVGEDNDR. A Glycyl lysine isopeptide (Lys-Gly) (interchain with G-Cter in SUMO2) cross-link involves residue lysine 613. Positions 664 to 690 are disordered; the sequence is FNHASLEPDDTSFSVSSLSEKNVSESL. Polar residues predominate over residues 674 to 690; that stretch reads TSFSVSSLSEKNVSESL.

It is found in the nucleus. The sequence is that of Highly divergent homeobox (HDX) from Homo sapiens (Human).